We begin with the raw amino-acid sequence, 177 residues long: Small ribosomal subunit protein eS10z (177 aa).

Residues 90–177 (TLKKSAKPGG…AAAPSGSGFP (88 aa)) form a disordered region. Over residues 108 to 140 (DRQRGPPRSDGDRPRFGDRDGYRGGPRGGDEKG) the composition is skewed to basic and acidic residues. Residues 141-150 (GAPADFQPSF) are compositionally biased toward low complexity. The span at 151–165 (QGGGGRPGFGRGAGG) shows a compositional bias: gly residues. Positions 166 to 177 (YSAAAPSGSGFP) are enriched in low complexity.

The protein belongs to the eukaryotic ribosomal protein eS10 family.

It is found in the cytoplasm. The sequence is that of Small ribosomal subunit protein eS10z (RPS10A) from Arabidopsis thaliana (Mouse-ear cress).